The chain runs to 299 residues: Tyrosine recombinase XerC (299 aa).

Residues 1-85 (MDQHLDAYCM…AVRGFYKYLN (85 aa)) enclose the Core-binding (CB) domain. In terms of domain architecture, Tyr recombinase spans 106–285 (RLPKTLDTDR…DFQHLATVYD (180 aa)). Residues Arg-146, Lys-170, His-237, Arg-240, and His-263 contribute to the active site. Tyr-272 (O-(3'-phospho-DNA)-tyrosine intermediate) is an active-site residue.

It belongs to the 'phage' integrase family. XerC subfamily. As to quaternary structure, forms a cyclic heterotetrameric complex composed of two molecules of XerC and two molecules of XerD.

The protein resides in the cytoplasm. Site-specific tyrosine recombinase, which acts by catalyzing the cutting and rejoining of the recombining DNA molecules. The XerC-XerD complex is essential to convert dimers of the bacterial chromosome into monomers to permit their segregation at cell division. It also contributes to the segregational stability of plasmids. This is Tyrosine recombinase XerC from Pseudomonas syringae pv. syringae (strain B728a).